Reading from the N-terminus, the 338-residue chain is Cytochrome f (338 aa).

The N-terminal stretch at 1–45 (MNFKVCSFPSRRQSIAAFVRVLMVILLTLGALVSSDVLLPQPAAA) is a signal peptide. 4 residues coordinate heme: Y46, C66, C69, and H70. Residues 300 to 316 (IAFLAAITLTQILLVLK) form a helical membrane-spanning segment.

It belongs to the cytochrome f family. The 4 large subunits of the cytochrome b6-f complex are cytochrome b6, subunit IV (17 kDa polypeptide, PetD), cytochrome f and the Rieske protein, while the 4 small subunits are PetG, PetL, PetM and PetN. The complex functions as a dimer. Heme serves as cofactor.

The protein resides in the cellular thylakoid membrane. Functionally, component of the cytochrome b6-f complex, which mediates electron transfer between photosystem II (PSII) and photosystem I (PSI), cyclic electron flow around PSI, and state transitions. In Leptolyngbya laminosa (Phormidium laminosum), this protein is Cytochrome f (petA).